The sequence spans 396 residues: Cell adhesion molecule 3 (396 aa).

A signal peptide spans 1-22 (MGAPSALPLLLLLACSWAPGGA). Residues 23 to 124 (NLSQDDSQPW…VRTAKSLVTV (102 aa)) enclose the Ig-like V-type domain. Topologically, residues 23-328 (NLSQDDSQPW…PVPSSSSTYH (306 aa)) are extracellular. 3 disulfides stabilise this stretch: Cys-48/Cys-108, Cys-150/Cys-207, and Cys-252/Cys-297. 2 consecutive Ig-like C2-type domains span residues 128-226 (PQKP…QRIE) and 231-313 (PTAM…FTLN). The N-linked (GlcNAc...) asparagine glycan is linked to Asn-288. Residues 329-349 (AIIGGIVAFIVFLLLILLIFL) form a helical membrane-spanning segment. Topologically, residues 350-396 (GHYLIRHKGTYLTHEAKGSDDAPDADTAIINAEGGQSGGDDKKEYFI) are cytoplasmic. The tract at residues 365-396 (AKGSDDAPDADTAIINAEGGQSGGDDKKEYFI) is disordered. Ser-386 carries the post-translational modification Phosphoserine.

This sequence belongs to the nectin family. As to quaternary structure, homodimer. Can form trans-heterodimers with NECTIN3. Interacts with EPB41L1, DLG3, PALS2 and CASK. In terms of tissue distribution, mainly expressed in brain, in neuronal cell bodies of cerebellum, cortex, hippocampus, hypothalamus and spinal cord. In spinal cord predominantly expressed in motor neurons. Expressed in axons, presynaptic nerve terminals, glia cell processes.

It localises to the cell membrane. Its subcellular location is the cell junction. In terms of biological role, involved in cell-cell adhesion. Has both calcium-independent homophilic cell-cell adhesion activity and calcium-independent heterophilic cell-cell adhesion activity with IGSF4, NECTIN1 and NECTIN3. Interaction with EPB41L1 may regulate structure or function of cell-cell junctions. The polypeptide is Cell adhesion molecule 3 (Cadm3) (Mus musculus (Mouse)).